We begin with the raw amino-acid sequence, 37 residues long: Photosystem II reaction center protein K (37 aa).

At 1–15 the chain is on the lumenal side; the sequence is KLPEAYAIFDPLVDV. Residues 16–30 traverse the membrane as a helical segment; that stretch reads LPVIPVLFFALAFVV. The Cytoplasmic segment spans residues 31 to 37; it reads QAAVGFR.

This sequence belongs to the PsbK family. As to quaternary structure, PSII is composed of 1 copy each of membrane proteins PsbA, PsbB, PsbC, PsbD, PsbE, PsbF, PsbH, PsbI, PsbJ, PsbK, PsbL, PsbM, PsbT, PsbX, PsbY, PsbZ, Psb30/Ycf12, peripheral proteins PsbO, CyanoQ (PsbQ), PsbU, PsbV and a large number of cofactors. It forms dimeric complexes. Requires PSII binds multiple chlorophylls, carotenoids and specific lipids. as cofactor.

It is found in the cellular thylakoid membrane. Functionally, one of the components of the core complex of photosystem II (PSII). PSII is a light-driven water:plastoquinone oxidoreductase that uses light energy to abstract electrons from H(2)O, generating O(2) and a proton gradient subsequently used for ATP formation. It consists of a core antenna complex that captures photons, and an electron transfer chain that converts photonic excitation into a charge separation. This is Photosystem II reaction center protein K from Thermostichus vulcanus (Synechococcus vulcanus).